A 207-amino-acid polypeptide reads, in one-letter code: Killer cell lectin-like receptor subfamily F member 2 (207 aa).

Residues methionine 1–glutamine 30 lie on the Cytoplasmic side of the membrane. A Phosphotyrosine modification is found at tyrosine 7. A helical; Signal-anchor for type II membrane protein transmembrane segment spans residues tyrosine 31–isoleucine 51. At aspartate 52–valine 207 the chain is on the extracellular side. Asparagine 67 carries an N-linked (GlcNAc...) asparagine glycan. Disulfide bonds link cysteine 78/cysteine 89, cysteine 106/cysteine 193, and cysteine 172/cysteine 185. Residues asparagine 85–glutamine 194 form the C-type lectin domain. An N-linked (GlcNAc...) asparagine glycan is attached at asparagine 202.

Homodimer; non-disulfide-linked. Interacts with CLEC2A. In terms of processing, N-glycosylated.

It localises to the cell membrane. Its function is as follows. C-type lectin-like receptor involved in natural killer cell mediated cytotoxicity and cytokine secretion in keratinocytes via its interaction with CLEC2A. Triggers degranulation in a SYK-dependent manner and stimulates SYK phosphotyrosinylation without recruiting SYK directly. The chain is Killer cell lectin-like receptor subfamily F member 2 (KLRF2) from Homo sapiens (Human).